The primary structure comprises 427 residues: Protein adenylyltransferase Fic (427 aa).

A helical transmembrane segment spans residues 17–37 (LLLASLAGLSIAIIVTHAPVF). 2 TPR repeats span residues 77-110 (ALAA…APHH) and 111-143 (PEIL…NPLD). The short motif at 200 to 205 (SNAIEG) is the Inhibitory (S/T)XXXE(G/N) motif element. Residues E204 and 286–289 (VSDH) each bind ATP. The Fido domain occupies 255–390 (ITIDDIIEIH…IRPFIRFVAR (136 aa)). H333 is a catalytic residue. Residues 337–344 (DGNGRTAR), 369–370 (YY), and N377 each bind ATP.

The protein belongs to the fic family. As to quaternary structure, homodimer.

It is found in the membrane. The catalysed reaction is L-tyrosyl-[protein] + ATP = O-(5'-adenylyl)-L-tyrosyl-[protein] + diphosphate. The enzyme catalyses L-threonyl-[protein] + ATP = 3-O-(5'-adenylyl)-L-threonyl-[protein] + diphosphate. It catalyses the reaction 3-O-(5'-adenylyl)-L-threonyl-[protein] + H2O = L-threonyl-[protein] + AMP + H(+). The side chain of Glu-204 determines which of the two opposing activities (AMPylase or de-AMPylase) will take place. In response to endoplasmic reticulum stress, mediates de-AMPylase activity. Adenylyltransferase activity is inhibited by the inhibitory helix present at the N-terminus: Glu-204 binds ATP and competes with ATP-binding at Arg-344, thereby preventing adenylyltransferase activity. In unstressed cells, disengagement of Glu-204 promotes adenylyltransferase activity. Activation dissociates ATP-binding from Glu-204, allowing ordered binding of the entire ATP moiety with the alpha-phosphate in an orientation that is productive for accepting an incoming target hydroxyl side chain. Functionally, protein that can both mediate the addition of adenosine 5'-monophosphate (AMP) to specific residues of target proteins (AMPylation), and the removal of the same modification from target proteins (de-AMPylation), depending on the context. The side chain of Glu-204 determines which of the two opposing activities (AMPylase or de-AMPylase) will take place. Acts as a key regulator of the unfolded protein response (UPR) by mediating AMPylation or de-AMPylation of Hsc70-3/BiP. In unstressed cells, acts as an adenylyltransferase by mediating AMPylation of Hsc70-3/BiP, thereby inactivating it. In response to endoplasmic reticulum stress, acts as a phosphodiesterase by mediating removal of ATP (de-AMPylation) from Hsc70-3/BiP, leading to restore HSPA5/BiP activity. The chain is Protein adenylyltransferase Fic from Nematostella vectensis (Starlet sea anemone).